The primary structure comprises 443 residues: Thymidine phosphorylase (443 aa).

Belongs to the thymidine/pyrimidine-nucleoside phosphorylase family. Homodimer.

It catalyses the reaction thymidine + phosphate = 2-deoxy-alpha-D-ribose 1-phosphate + thymine. The protein operates within pyrimidine metabolism; dTMP biosynthesis via salvage pathway; dTMP from thymine: step 1/2. In terms of biological role, the enzymes which catalyze the reversible phosphorolysis of pyrimidine nucleosides are involved in the degradation of these compounds and in their utilization as carbon and energy sources, or in the rescue of pyrimidine bases for nucleotide synthesis. The polypeptide is Thymidine phosphorylase (Shewanella loihica (strain ATCC BAA-1088 / PV-4)).